The sequence spans 122 residues: Small ribosomal subunit protein uS13 (122 aa).

Residues 99–122 (RGQRTHTNARTRKGPAKAIAGKKK) are disordered.

This sequence belongs to the universal ribosomal protein uS13 family. Part of the 30S ribosomal subunit. Forms a loose heterodimer with protein S19. Forms two bridges to the 50S subunit in the 70S ribosome.

Its function is as follows. Located at the top of the head of the 30S subunit, it contacts several helices of the 16S rRNA. In the 70S ribosome it contacts the 23S rRNA (bridge B1a) and protein L5 of the 50S subunit (bridge B1b), connecting the 2 subunits; these bridges are implicated in subunit movement. Contacts the tRNAs in the A and P-sites. The protein is Small ribosomal subunit protein uS13 of Parvibaculum lavamentivorans (strain DS-1 / DSM 13023 / NCIMB 13966).